A 461-amino-acid chain; its full sequence is Aspartic proteinase NANA, chloroplast (461 aa).

A glycan (N-linked (GlcNAc...) asparagine) is linked at N86. The region spanning 106–456 (YFTEIRVGTP…DLMASTLSFA (351 aa)) is the Peptidase A1 domain. Residue D124 is part of the active site. An N-linked (GlcNAc...) asparagine glycan is attached at N274. D338 is an active-site residue. N386 carries N-linked (GlcNAc...) asparagine glycosylation.

This sequence belongs to the peptidase A1 family.

Its subcellular location is the plastid. The protein localises to the chloroplast. Repressed by pepstatin A. In terms of biological role, aspartic proteinase that can use azocasein as substrate and regulates endogenous sugar levels (e.g. sucrose, glucose and fructose) by modulating starch accumulation and remobilization. Influences general morphology and development. The polypeptide is Aspartic proteinase NANA, chloroplast (Arabidopsis thaliana (Mouse-ear cress)).